The following is a 308-amino-acid chain: Aspartate carbamoyltransferase catalytic subunit (308 aa).

The carbamoyl phosphate site is built by Arg57 and Thr58. Lys86 is an L-aspartate binding site. The carbamoyl phosphate site is built by Arg107, His135, and Gln138. Residues Arg168 and Arg229 each contribute to the L-aspartate site. Carbamoyl phosphate is bound by residues Leu268 and Pro269.

Belongs to the aspartate/ornithine carbamoyltransferase superfamily. ATCase family. In terms of assembly, heterooligomer of catalytic and regulatory chains.

It catalyses the reaction carbamoyl phosphate + L-aspartate = N-carbamoyl-L-aspartate + phosphate + H(+). The protein operates within pyrimidine metabolism; UMP biosynthesis via de novo pathway; (S)-dihydroorotate from bicarbonate: step 2/3. Its function is as follows. Catalyzes the condensation of carbamoyl phosphate and aspartate to form carbamoyl aspartate and inorganic phosphate, the committed step in the de novo pyrimidine nucleotide biosynthesis pathway. The sequence is that of Aspartate carbamoyltransferase catalytic subunit from Pyrococcus horikoshii (strain ATCC 700860 / DSM 12428 / JCM 9974 / NBRC 100139 / OT-3).